The following is a 514-amino-acid chain: Glucose-6-phosphate 1-dehydrogenase 2 (514 aa).

Residues arginine 69 and lysine 176 each contribute to the NADP(+) site. The substrate site is built by histidine 206, lysine 210, glutamate 244, and aspartate 263. Histidine 268 acts as the Proton acceptor in catalysis. Residue lysine 366 coordinates substrate.

It belongs to the glucose-6-phosphate dehydrogenase family.

It catalyses the reaction D-glucose 6-phosphate + NADP(+) = 6-phospho-D-glucono-1,5-lactone + NADPH + H(+). The protein operates within carbohydrate degradation; pentose phosphate pathway; D-ribulose 5-phosphate from D-glucose 6-phosphate (oxidative stage): step 1/3. Its function is as follows. Catalyzes the oxidation of glucose 6-phosphate to 6-phosphogluconolactone. This is Glucose-6-phosphate 1-dehydrogenase 2 from Mycobacterium bovis (strain ATCC BAA-935 / AF2122/97).